Consider the following 247-residue polypeptide: Putative cyclin-T1-1 (247 aa).

It belongs to the cyclin family. Cyclin T subfamily.

The polypeptide is Putative cyclin-T1-1 (CYCT1-1) (Arabidopsis thaliana (Mouse-ear cress)).